Consider the following 157-residue polypeptide: Cyclic pyranopterin monophosphate synthase (157 aa).

Substrate-binding positions include 74–76 (MCH) and 112–113 (ME). The active site involves Asp127.

It belongs to the MoaC family. As to quaternary structure, homohexamer; trimer of dimers.

It catalyses the reaction (8S)-3',8-cyclo-7,8-dihydroguanosine 5'-triphosphate = cyclic pyranopterin phosphate + diphosphate. Its pathway is cofactor biosynthesis; molybdopterin biosynthesis. Catalyzes the conversion of (8S)-3',8-cyclo-7,8-dihydroguanosine 5'-triphosphate to cyclic pyranopterin monophosphate (cPMP). In Campylobacter jejuni subsp. doylei (strain ATCC BAA-1458 / RM4099 / 269.97), this protein is Cyclic pyranopterin monophosphate synthase.